Reading from the N-terminus, the 170-residue chain is Alpha-crystallin A chain (170 aa).

The residue at position 1 (M1) is an N-acetylmethionine. The required for complex formation with BFSP1 and BFSP2 stretch occupies residues 1–63 (MDVTIQQPWF…RTALDSGISE (63 aa)). Q6 is subject to Deamidated glutamine; partial. The residue at position 45 (S45) is a Phosphoserine. Q50 is modified (deamidated glutamine; partial). The 110-residue stretch at 52–161 (LFRTALDSGI…SERPIPVSRE (110 aa)) folds into the sHSP domain. K70 and K99 each carry N6-acetyllysine. Zn(2+) is bound at residue H100. A Deamidated asparagine; partial modification is found at N101. The Zn(2+) site is built by E102, H107, and H151. Residues 144-170 (PKIVDPSHSERPIPVSREEKPSSAPSS) are disordered. Positions 148–164 (DPSHSERPIPVSREEKP) are enriched in basic and acidic residues. The O-linked (GlcNAc) serine glycan is linked to S159.

The protein belongs to the small heat shock protein (HSP20) family. As to quaternary structure, heteromer composed of three CRYAA and one CRYAB subunits. Inter-subunit bridging via zinc ions enhances stability, which is crucial as there is no protein turn over in the lens. Can also form homodimers and homotetramers (dimers of dimers) which serve as the building blocks of homooligomers. Within homooligomers, the zinc-binding motif is created from residues of 3 different molecules. His-100 and Glu-102 from one molecule are ligands of the zinc ion, and His-107 and His-151 residues from additional molecules complete the site with tetrahedral coordination geometry. Part of a complex required for lens intermediate filament formation composed of BFSP1, BFSP2 and CRYAA. Acetylation at Lys-70 may increase chaperone activity. In terms of processing, undergoes age-dependent proteolytical cleavage at the C-terminus.

The protein localises to the cytoplasm. It is found in the nucleus. Its function is as follows. Contributes to the transparency and refractive index of the lens. Acts as a chaperone, preventing aggregation of various proteins under a wide range of stress conditions. Required for the correct formation of lens intermediate filaments as part of a complex composed of BFSP1, BFSP2 and CRYAA. The chain is Alpha-crystallin A chain (CRYAA) from Bradypus variegatus (Brown-throated three-fingered sloth).